Reading from the N-terminus, the 102-residue chain is RNA-binding protein Hfq (102 aa).

In terms of domain architecture, Sm spans 9–68 (DPFLNALRRERVPVSIYLVNGIKLQGQIESFDQFVILLKNTVSQMVYKHAISTVVPSRPV). The interval 63–102 (VPSRPVSHHSNNAGGGTSNNYHHGSNAQGSGAQQDSEETE) is disordered. The segment covering 70–96 (HHSNNAGGGTSNNYHHGSNAQGSGAQQ) has biased composition (polar residues).

The protein belongs to the Hfq family. Homohexamer.

Its function is as follows. RNA chaperone that binds small regulatory RNA (sRNAs) and mRNAs to facilitate mRNA translational regulation in response to envelope stress, environmental stress and changes in metabolite concentrations. Also binds with high specificity to tRNAs. The chain is RNA-binding protein Hfq from Salmonella arizonae (strain ATCC BAA-731 / CDC346-86 / RSK2980).